A 243-amino-acid polypeptide reads, in one-letter code: 7-carboxy-7-deazaguanine synthase (243 aa).

Substrate is bound by residues 15–17 (IQG) and R30. One can recognise a Radical SAM core domain in the interval 21–239 (VIGQKTMFVR…PQLHTLLWGN (219 aa)). 3 residues coordinate [4Fe-4S] cluster: C34, C38, and C41. S43 lines the Mg(2+) pocket. S81 provides a ligand contact to substrate. S-adenosyl-L-methionine contacts are provided by residues G83 and 127-129 (SPK).

It belongs to the radical SAM superfamily. 7-carboxy-7-deazaguanine synthase family. In terms of assembly, homodimer. The cofactor is [4Fe-4S] cluster. S-adenosyl-L-methionine serves as cofactor. Mg(2+) is required as a cofactor.

The enzyme catalyses 6-carboxy-5,6,7,8-tetrahydropterin + H(+) = 7-carboxy-7-deazaguanine + NH4(+). The protein operates within purine metabolism; 7-cyano-7-deazaguanine biosynthesis. Functionally, catalyzes the complex heterocyclic radical-mediated conversion of 6-carboxy-5,6,7,8-tetrahydropterin (CPH4) to 7-carboxy-7-deazaguanine (CDG), a step common to the biosynthetic pathways of all 7-deazapurine-containing compounds. This Bacillus subtilis (strain 168) protein is 7-carboxy-7-deazaguanine synthase.